The following is a 26-amino-acid chain: Oxyopinin-3a (26 aa).

As to expression, expressed by the venom gland.

Its subcellular location is the secreted. May have cytolytic and antimicrobial activity. The protein is Oxyopinin-3a of Oxyopes takobius (Lynx spider).